The sequence spans 321 residues: uncharacterized protein (321 aa).

The segment at 1–80 (MQGGQEVGRE…GELSGGWGEF (80 aa)) is disordered.

This is an uncharacterized protein from Mus musculus (Mouse).